The chain runs to 376 residues: Chaperone protein DnaJ (376 aa).

A J domain is found at 5-70 (DYYEVLGVAR…NKRRMYDSHG (66 aa)). The CR-type zinc finger occupies 132-209 (GVERRIEIPT…CHGNGRVEED (78 aa)). Positions 145, 148, 161, 164, 183, 186, 197, and 200 each coordinate Zn(2+). 4 CXXCXGXG motif repeats span residues 145–152 (CGDCDGSG), 161–168 (CNVCHGRG), 183–190 (CHNCGGRG), and 197–204 (CKTCHGNG). A disordered region spans residues 223 to 242 (GDRIRLSGEGEAGPAGTPPG).

Belongs to the DnaJ family. As to quaternary structure, homodimer. Zn(2+) is required as a cofactor.

It is found in the cytoplasm. Participates actively in the response to hyperosmotic and heat shock by preventing the aggregation of stress-denatured proteins and by disaggregating proteins, also in an autonomous, DnaK-independent fashion. Unfolded proteins bind initially to DnaJ; upon interaction with the DnaJ-bound protein, DnaK hydrolyzes its bound ATP, resulting in the formation of a stable complex. GrpE releases ADP from DnaK; ATP binding to DnaK triggers the release of the substrate protein, thus completing the reaction cycle. Several rounds of ATP-dependent interactions between DnaJ, DnaK and GrpE are required for fully efficient folding. Also involved, together with DnaK and GrpE, in the DNA replication of plasmids through activation of initiation proteins. The chain is Chaperone protein DnaJ from Stenotrophomonas maltophilia (strain R551-3).